Consider the following 1814-residue polypeptide: U3 small nucleolar RNA-associated protein 10 (1814 aa).

The stretch at 583-620 (LDFQALLPFLLVALTDASERVRREAAAALAAVGSLYKK) is one HEAT 1 repeat. 2 helical membrane-spanning segments follow: residues 942 to 962 (IQSG…AIVN) and 998 to 1018 (ALLL…HSVM). HEAT repeat units lie at residues 1042–1079 (QTID…AFEH), 1249–1286 (LTLV…QNPE), 1293–1331 (IRVL…KYGK), and 1770–1807 (ALLP…VLGE).

Belongs to the HEATR1/UTP10 family. Component of the ribosomal small subunit (SSU) processome.

The protein localises to the nucleus. Its subcellular location is the nucleolus. The protein resides in the membrane. Involved in nucleolar processing of pre-18S ribosomal RNA. Involved in ribosome biosynthesis. The sequence is that of U3 small nucleolar RNA-associated protein 10 from Neosartorya fischeri (strain ATCC 1020 / DSM 3700 / CBS 544.65 / FGSC A1164 / JCM 1740 / NRRL 181 / WB 181) (Aspergillus fischerianus).